Consider the following 221-residue polypeptide: UPF0758 protein YicR (221 aa).

Residues alanine 99–isoleucine 221 enclose the MPN domain. Residues histidine 170, histidine 172, and aspartate 183 each coordinate Zn(2+). Positions histidine 170–aspartate 183 match the JAMM motif motif.

The protein belongs to the UPF0758 family. YicR subfamily.

In Salmonella newport (strain SL254), this protein is UPF0758 protein YicR.